We begin with the raw amino-acid sequence, 310 residues long: Small ribosomal subunit biogenesis GTPase RsgA (310 aa).

The CP-type G domain maps to 77-238; sequence LSKQSHILAA…IIDTPGIKGF (162 aa). Residues 126-129 and 180-188 contribute to the GTP site; these read NKTD and GNSGVGKST. Positions 262, 267, 269, and 275 each coordinate Zn(2+).

This sequence belongs to the TRAFAC class YlqF/YawG GTPase family. RsgA subfamily. In terms of assembly, monomer. Associates with 30S ribosomal subunit, binds 16S rRNA. Zn(2+) is required as a cofactor.

Its subcellular location is the cytoplasm. Functionally, one of several proteins that assist in the late maturation steps of the functional core of the 30S ribosomal subunit. Helps release RbfA from mature subunits. May play a role in the assembly of ribosomal proteins into the subunit. Circularly permuted GTPase that catalyzes slow GTP hydrolysis, GTPase activity is stimulated by the 30S ribosomal subunit. This Phocaeicola vulgatus (strain ATCC 8482 / DSM 1447 / JCM 5826 / CCUG 4940 / NBRC 14291 / NCTC 11154) (Bacteroides vulgatus) protein is Small ribosomal subunit biogenesis GTPase RsgA.